The sequence spans 414 residues: Isocitrate dehydrogenase [NADP] cytoplasmic (414 aa).

Residue Ser-2 is modified to N-acetylserine. At Tyr-42 the chain carries Phosphotyrosine. Residue 75 to 77 coordinates NADP(+); it reads TIT. Position 77 (Thr-77) interacts with substrate. Lys-81 carries the post-translational modification N6-acetyllysine. Position 82 (Arg-82) interacts with NADP(+). Residues 94–100 and Arg-109 contribute to the substrate site; that span reads SPNGTIR. Lys-126 carries the N6-succinyllysine modification. Substrate contacts are provided by Arg-132 and Lys-212. Residues Lys-224 and Lys-233 each carry the N6-acetyllysine modification. Asp-252 lines the Mn(2+) pocket. Lys-260 is a binding site for NADP(+). Residues Asp-275 and Asp-279 each coordinate Mn(2+). 310–315 contributes to the NADP(+) binding site; sequence GTVTRH. N6-acetyllysine is present on Lys-321. Asn-328 is a binding site for NADP(+). The residue at position 389 (Ser-389) is a Phosphoserine. Lys-400 bears the N6-succinyllysine mark.

The protein belongs to the isocitrate and isopropylmalate dehydrogenases family. As to quaternary structure, homodimer. The cofactor is Mg(2+). Mn(2+) is required as a cofactor. Acetylation at Lys-374 dramatically reduces catalytic activity. In terms of tissue distribution, expressed preferentially in corneal epithelium. Constitute approximately 13% of the total soluble bovine corneal epithelial proteins.

The protein localises to the cytoplasm. Its subcellular location is the cytosol. The enzyme catalyses D-threo-isocitrate + NADP(+) = 2-oxoglutarate + CO2 + NADPH. Catalyzes the NADP(+)-dependent oxidative decarboxylation of isocitrate (D-threo-isocitrate) to 2-ketoglutarate (2-oxoglutarate), which is required by other enzymes such as the phytanoyl-CoA dioxygenase. Plays a critical role in the generation of NADPH, an important cofactor in many biosynthesis pathways. May act as a corneal epithelial crystallin and may be involved in maintaining corneal epithelial transparency. The sequence is that of Isocitrate dehydrogenase [NADP] cytoplasmic (IDH1) from Bos taurus (Bovine).